The primary structure comprises 131 residues: GATA zinc finger domain-containing protein 2 (131 aa).

A compositionally biased stretch (low complexity) spans 21–55 (STATDATSADGAASETDAASATDTTSATDPTSATD). The disordered stretch occupies residues 21-85 (STATDATSAD…RGRPYISTPP (65 aa)). Polar residues predominate over residues 57-74 (IATTNTTGITSSGPTTNG). The GATA-type zinc finger occupies 88–115 (CYDCGRTRSPYWRKGTYNGQVVHLCNAC).

The sequence is that of GATA zinc finger domain-containing protein 2 (comH) from Dictyostelium discoideum (Social amoeba).